A 31-amino-acid polypeptide reads, in one-letter code: Cytochrome b6-f complex subunit 6 (31 aa).

A helical membrane pass occupies residues 4 to 24 (ITSYFGFLLAALTITSVLFIG).

It belongs to the PetL family. The 4 large subunits of the cytochrome b6-f complex are cytochrome b6, subunit IV (17 kDa polypeptide, PetD), cytochrome f and the Rieske protein, while the 4 small subunits are PetG, PetL, PetM and PetN. The complex functions as a dimer.

The protein resides in the plastid. It localises to the chloroplast thylakoid membrane. Functionally, component of the cytochrome b6-f complex, which mediates electron transfer between photosystem II (PSII) and photosystem I (PSI), cyclic electron flow around PSI, and state transitions. PetL is important for photoautotrophic growth as well as for electron transfer efficiency and stability of the cytochrome b6-f complex. This chain is Cytochrome b6-f complex subunit 6, found in Arabidopsis thaliana (Mouse-ear cress).